The sequence spans 140 residues: Nucleoside diphosphate kinase (140 aa).

Positions 11, 59, 87, 93, 104, and 114 each coordinate ATP. The active-site Pros-phosphohistidine intermediate is the H117.

Belongs to the NDK family. In terms of assembly, homotetramer. It depends on Mg(2+) as a cofactor.

The protein resides in the cytoplasm. The catalysed reaction is a 2'-deoxyribonucleoside 5'-diphosphate + ATP = a 2'-deoxyribonucleoside 5'-triphosphate + ADP. The enzyme catalyses a ribonucleoside 5'-diphosphate + ATP = a ribonucleoside 5'-triphosphate + ADP. Its function is as follows. Major role in the synthesis of nucleoside triphosphates other than ATP. The ATP gamma phosphate is transferred to the NDP beta phosphate via a ping-pong mechanism, using a phosphorylated active-site intermediate. The protein is Nucleoside diphosphate kinase of Rhodopseudomonas palustris (strain BisB18).